Consider the following 78-residue polypeptide: Large ribosomal subunit protein bL28 (78 aa).

The segment at 1 to 20 (MSRVCQVTGKRPAVGNNRSH) is disordered.

This sequence belongs to the bacterial ribosomal protein bL28 family.

The polypeptide is Large ribosomal subunit protein bL28 (Actinobacillus pleuropneumoniae serotype 7 (strain AP76)).